A 271-amino-acid chain; its full sequence is MPELPEVETTLRGIAPHVTGRRVTAVTARAAKLRLPIPPELGERLTGRVIERVERRAKYLLLRCGDGTAIIHLGMTGTLRVAPAGSPPGKYDHLDLVLDDGRTLRFRDPRKFGLVLWTGSDPLAHPLLAQLGPEPFPPLFNGSYLFSRSRKRNAAIKLLLMDNRIVVGVGNIYANEALFRARIHPERAAGSLSEEDCATLATAVGDVLRDAIAEGDTTLHEFIATEVPSGYFRINPAVYGQTGKPCTVCGTPIARIRLGNRSTWFCPVCQK.

The active-site Schiff-base intermediate with DNA is Pro-2. Glu-3 acts as the Proton donor in catalysis. Lys-58 serves as the catalytic Proton donor; for beta-elimination activity. Positions 110 and 152 each coordinate DNA. The segment at 237-271 (AVYGQTGKPCTVCGTPIARIRLGNRSTWFCPVCQK) adopts an FPG-type zinc-finger fold. Catalysis depends on Arg-261, which acts as the Proton donor; for delta-elimination activity.

This sequence belongs to the FPG family. In terms of assembly, monomer. The cofactor is Zn(2+).

The catalysed reaction is Hydrolysis of DNA containing ring-opened 7-methylguanine residues, releasing 2,6-diamino-4-hydroxy-5-(N-methyl)formamidopyrimidine.. It catalyses the reaction 2'-deoxyribonucleotide-(2'-deoxyribose 5'-phosphate)-2'-deoxyribonucleotide-DNA = a 3'-end 2'-deoxyribonucleotide-(2,3-dehydro-2,3-deoxyribose 5'-phosphate)-DNA + a 5'-end 5'-phospho-2'-deoxyribonucleoside-DNA + H(+). Its function is as follows. Involved in base excision repair of DNA damaged by oxidation or by mutagenic agents. Acts as a DNA glycosylase that recognizes and removes damaged bases. Has a preference for oxidized purines, such as 7,8-dihydro-8-oxoguanine (8-oxoG). Has AP (apurinic/apyrimidinic) lyase activity and introduces nicks in the DNA strand. Cleaves the DNA backbone by beta-delta elimination to generate a single-strand break at the site of the removed base with both 3'- and 5'-phosphates. This is Formamidopyrimidine-DNA glycosylase from Geobacter sulfurreducens (strain ATCC 51573 / DSM 12127 / PCA).